A 449-amino-acid polypeptide reads, in one-letter code: Delta(8)-fatty-acid desaturase 2 (449 aa).

A Cytochrome b5 heme-binding domain is found at 7–91 (KRYVTSEDLK…VRDHHVSDVS (85 aa)). Heme is bound by residues histidine 42 and histidine 65. The next 2 membrane-spanning stretches (helical) occupy residues 113 to 133 (VTLY…YGVL) and 138 to 158 (IWAH…SAYV). The Histidine box-1 signature appears at 160 to 164 (HDSGH). A helical transmembrane segment spans residues 176 to 196 (LIQLLSGNCLTGISIAWWKWT). Positions 197 to 201 (HNAHH) match the Histidine box-2 motif. Transmembrane regions (helical) follow at residues 255-275 (FYPV…LLLF), 284-304 (ALNI…VSFL), and 311-331 (FIFV…FCLN). A Histidine box-3 motif is present at residues 374-378 (QLEHH).

The protein belongs to the fatty acid desaturase type 1 family. Requires Fe cation as cofactor. In terms of tissue distribution, highly expressed in flowers and siliques. Expressed at low levels in roots, leaves and stems.

The protein localises to the endoplasmic reticulum membrane. It catalyses the reaction an N-acyl-(4R)-4-hydroxysphinganine + 2 Fe(II)-[cytochrome b5] + O2 + 2 H(+) = a (4R,8E)-4-hydroxysphingenine ceramide + 2 Fe(III)-[cytochrome b5] + 2 H2O. The enzyme catalyses an N-acyl-(4R)-4-hydroxysphinganine + 2 Fe(II)-[cytochrome b5] + O2 + 2 H(+) = a (4R,8Z)-4-hydroxysphing-8-enine ceramide + 2 Fe(III)-[cytochrome b5] + 2 H2O. In terms of biological role, plays a major role as delta(8)-fatty-acid desaturase which introduces a double bond at the 8-position in the long-chain base (LCB) of ceramides with or without a hydroxy group at the 4-position. The enzyme produces both the 8E and 8Z isomers (in a 4:1 ratio). This structural modification contributes to the quantitative partitioning of ceramides between the two major sphingolipid classes, glucosylceramides and glycosylinositolphosphoryl ceramides. Sphingolipids are important membrane components involved in environmental stress responses, such as resistance to chilling, and act as cell signaling molecules. This is Delta(8)-fatty-acid desaturase 2 (SLD2) from Arabidopsis thaliana (Mouse-ear cress).